Here is a 157-residue protein sequence, read N- to C-terminus: Glycine-rich RNA-binding protein (157 aa).

Residues 6-84 form the RRM domain; sequence YRCFVGGLAW…RNITVNEAQS (79 aa). Residues 70-157 form a disordered region; sequence QELDGRNITV…YGGGGGGSRW (88 aa). Composition is skewed to gly residues over residues 86–138 and 145–157; these read GSGG…GGYG and DGGY…GSRW.

In terms of biological role, may play a role in the biosynthesis and processing of heterogeneous nuclear RNA and in the maturation of specific mRNAs in response to wounding. The polypeptide is Glycine-rich RNA-binding protein (Daucus carota (Wild carrot)).